Here is a 539-residue protein sequence, read N- to C-terminus: Chaperonin GroEL 2 (539 aa).

ATP is bound by residues 30–33 (TLGP), Lys-51, 87–91 (DGTTT), Gly-415, 480–482 (NAA), and Asp-496.

It belongs to the chaperonin (HSP60) family. In terms of assembly, forms a cylinder of 14 subunits composed of two heptameric rings stacked back-to-back. Interacts with the co-chaperonin GroES.

The protein localises to the cytoplasm. The catalysed reaction is ATP + H2O + a folded polypeptide = ADP + phosphate + an unfolded polypeptide.. In terms of biological role, together with its co-chaperonin GroES, plays an essential role in assisting protein folding. The GroEL-GroES system forms a nano-cage that allows encapsulation of the non-native substrate proteins and provides a physical environment optimized to promote and accelerate protein folding. This chain is Chaperonin GroEL 2, found in Sphingopyxis alaskensis (strain DSM 13593 / LMG 18877 / RB2256) (Sphingomonas alaskensis).